The chain runs to 481 residues: MTSPVENSTSTEKLTLAEKVWRDHVVSKGENGEPDLLYIDLQLLHEVTSPQAFDGLRMTGRKLRHPELHLATEDHNVPTEGIKTGSLLEINDQISRLQVSTLRDNCEEFGVRLHPMGDVRQGIVHTVGPQLGATQPGMTIVCGDSHTSXHGAFGSMAFGIGTSEVEHVMATQTLPLKPFKTMAIEVTGELQPGVSSKDLILAIIAKIGTGGGQGYVLEYRGEAIRKMSMDARMTMCNMSIEAGARAGMIAPDQTTFDYVEGREMAPKGADWDEAVAYWKTLPTDEGATFDKVVEIDGSALTPFITWGTNPGQGLPLGESVPSPEDFTNDNDKAAAEKALQYMDLVPGTPLRDIKIDTVFLGSCTNARIEDLQIAADILKGHKIADGMRMMVVPSSTWIKQEAEALGLDKIFTDAGAEWRTAGCSMCLGMNPDQLKPGERSASTSNRNFEGRQGPGGRTHLVSPAVAAATAIRGTLSSPADL.

The [4Fe-4S] cluster site is built by Cys363, Cys423, and Cys426. The segment at 432 to 459 is disordered; it reads DQLKPGERSASTSNRNFEGRQGPGGRTH.

This sequence belongs to the aconitase/IPM isomerase family. LeuC type 1 subfamily. Heterodimer of LeuC and LeuD. [4Fe-4S] cluster is required as a cofactor.

It carries out the reaction (2R,3S)-3-isopropylmalate = (2S)-2-isopropylmalate. It functions in the pathway amino-acid biosynthesis; L-leucine biosynthesis; L-leucine from 3-methyl-2-oxobutanoate: step 2/4. Catalyzes the isomerization between 2-isopropylmalate and 3-isopropylmalate, via the formation of 2-isopropylmaleate. This Corynebacterium glutamicum (strain R) protein is 3-isopropylmalate dehydratase large subunit.